Here is a 313-residue protein sequence, read N- to C-terminus: Transcription initiation factor IIB 2 (313 aa).

A TFIIB-type zinc finger spans residues 13–44 (APKRCPECHSEHLIRDYEHGELICADCGAVIE). Positions 17, 20, 36, and 39 each coordinate Zn(2+). Repeat copies occupy residues 130 to 213 (QLLN…AKEL) and 224 to 305 (SYIA…EISK).

The protein belongs to the TFIIB family.

In terms of biological role, stabilizes TBP binding to an archaeal box-A promoter. Also responsible for recruiting RNA polymerase II to the pre-initiation complex (DNA-TBP-TFIIB). This Thermoplasma volcanium (strain ATCC 51530 / DSM 4299 / JCM 9571 / NBRC 15438 / GSS1) protein is Transcription initiation factor IIB 2.